The chain runs to 94 residues: Acylphosphatase (94 aa).

An Acylphosphatase-like domain is found at 7 to 94 (RLTARITGVV…GEFDDFRIID (88 aa)). Residues Arg-22 and Asn-40 contribute to the active site.

The protein belongs to the acylphosphatase family.

The enzyme catalyses an acyl phosphate + H2O = a carboxylate + phosphate + H(+). This chain is Acylphosphatase (acyP), found in Paenarthrobacter aurescens (strain TC1).